The sequence spans 415 residues: Imidazolonepropionase (415 aa).

Residues His-75 and His-77 each coordinate Fe(3+). Residues His-75 and His-77 each contribute to the Zn(2+) site. Positions 84, 147, and 180 each coordinate 4-imidazolone-5-propanoate. Tyr-147 is a binding site for N-formimidoyl-L-glutamate. His-245 contacts Fe(3+). Position 245 (His-245) interacts with Zn(2+). A 4-imidazolone-5-propanoate-binding site is contributed by Gln-248. Asp-320 provides a ligand contact to Fe(3+). Asp-320 contacts Zn(2+). The N-formimidoyl-L-glutamate site is built by Asn-322 and Gly-324. Thr-325 is a binding site for 4-imidazolone-5-propanoate.

Belongs to the metallo-dependent hydrolases superfamily. HutI family. Requires Zn(2+) as cofactor. It depends on Fe(3+) as a cofactor.

It is found in the cytoplasm. It catalyses the reaction 4-imidazolone-5-propanoate + H2O = N-formimidoyl-L-glutamate. It functions in the pathway amino-acid degradation; L-histidine degradation into L-glutamate; N-formimidoyl-L-glutamate from L-histidine: step 3/3. Its function is as follows. Catalyzes the hydrolytic cleavage of the carbon-nitrogen bond in imidazolone-5-propanoate to yield N-formimidoyl-L-glutamate. It is the third step in the universal histidine degradation pathway. This Photorhabdus laumondii subsp. laumondii (strain DSM 15139 / CIP 105565 / TT01) (Photorhabdus luminescens subsp. laumondii) protein is Imidazolonepropionase.